The primary structure comprises 1196 residues: Nucleolar protein 6 (1196 aa).

Disordered stretches follow at residues 1 to 74 (MPGK…NVKP) and 1140 to 1196 (KREQ…KALK). 2 stretches are compositionally biased toward basic and acidic residues: residues 22-31 (HAEDHSDLEH) and 65-74 (HRGDTKNVKP). Basic residues predominate over residues 1165-1187 (KPKKHGKRKGTGKAAPPKKKRLI).

This sequence belongs to the NRAP family. In terms of assembly, part of the small subunit (SSU) processome, composed of more than 70 proteins and the RNA chaperone small nucleolar RNA (snoRNA) U3.

It is found in the nucleus. Its subcellular location is the nucleolus. The protein resides in the chromosome. Part of the small subunit (SSU) processome, first precursor of the small eukaryotic ribosomal subunit. During the assembly of the SSU processome in the nucleolus, many ribosome biogenesis factors, an RNA chaperone and ribosomal proteins associate with the nascent pre-rRNA and work in concert to generate RNA folding, modifications, rearrangements and cleavage as well as targeted degradation of pre-ribosomal RNA by the RNA exosome. This Drosophila simulans (Fruit fly) protein is Nucleolar protein 6.